Here is a 432-residue protein sequence, read N- to C-terminus: Putative D-alanyl-D-alanine carboxypeptidase (432 aa).

The chain crosses the membrane as a helical; Signal-anchor span at residues 7–25 (ATVLLTFSLSAFAVEYPVL).

Belongs to the peptidase S12 family. YfeW subfamily.

The protein localises to the cell inner membrane. It catalyses the reaction Preferential cleavage: (Ac)2-L-Lys-D-Ala-|-D-Ala. Also transpeptidation of peptidyl-alanyl moieties that are N-acyl substituents of D-alanine.. The chain is Putative D-alanyl-D-alanine carboxypeptidase from Salmonella schwarzengrund (strain CVM19633).